The following is a 354-amino-acid chain: MTELKNDRYLRALLRQPVDVTPVWMMRQAGRYLPEYKATRAQAGDFMSLCKNAELACEVTLQPLRRYPLDAAILFSDILTVPDAMGLGLYFEAGEGPRFTSPVTCKADVDKLPIPDPEDELGYVMNAVRTIRRELKGEVPLIGFSGSPWTLATYMVEGGSSKAFTVIKKMMYADPQALHALLDKLAKSVTLYLNAQIKAGAQAVMIFDTWGGVLTGRDYQQFSLYYMHKIVDGLLRENDGRRVPVTLFTKGGGQWLEAMAETGCDALGLDWTTDIADARRRVGNKVALQGNMDPSMLYAPPARIEEEVATILAGFGHGEGHVFNLGHGIHQDVPLEHAGVFVEAVHRLSEQYHR.

Substrate-binding positions include 27 to 31, D77, Y154, T209, and H327; that span reads RQAGR.

Belongs to the uroporphyrinogen decarboxylase family. As to quaternary structure, homodimer.

The protein localises to the cytoplasm. It carries out the reaction uroporphyrinogen III + 4 H(+) = coproporphyrinogen III + 4 CO2. It participates in porphyrin-containing compound metabolism; protoporphyrin-IX biosynthesis; coproporphyrinogen-III from 5-aminolevulinate: step 4/4. Functionally, catalyzes the decarboxylation of four acetate groups of uroporphyrinogen-III to yield coproporphyrinogen-III. This Shigella dysenteriae serotype 1 (strain Sd197) protein is Uroporphyrinogen decarboxylase.